The sequence spans 119 residues: Inner membrane protein YijD (119 aa).

Over 1 to 8 the chain is Cytoplasmic; it reads MKQANQDR. The chain crosses the membrane as a helical span at residues 9-28; the sequence is GTLLLALVAGLSINGTFAAL. Residues 29–31 lie on the Periplasmic side of the membrane; that stretch reads FSS. A helical membrane pass occupies residues 32–50; the sequence is IVPFSVFPIISLVLTVYCL. Over 51 to 61 the chain is Cytoplasmic; sequence HQRYLNRTMPV. Residues 62-84 form a helical membrane-spanning segment; sequence GLPGLAAACFILGVLLYSTVVRA. Over 85-88 the chain is Periplasmic; sequence EYPD. Residues 89–108 traverse the membrane as a helical segment; the sequence is IGSNFFPAVLSVIMVFWIGA. Residues 109–119 lie on the Cytoplasmic side of the membrane; that stretch reads KMRNRKQEVAE.

It is found in the cell inner membrane. This chain is Inner membrane protein YijD (yijD), found in Escherichia coli O6:H1 (strain CFT073 / ATCC 700928 / UPEC).